The primary structure comprises 311 residues: Lipoyl synthase (311 aa).

[4Fe-4S] cluster-binding residues include cysteine 36, cysteine 41, cysteine 47, cysteine 66, cysteine 70, cysteine 73, and serine 280. Residues 51-269 enclose the Radical SAM core domain; that stretch reads RDGPGTATFM…RVAESEFGFL (219 aa).

It belongs to the radical SAM superfamily. Lipoyl synthase family. [4Fe-4S] cluster is required as a cofactor.

It is found in the cytoplasm. It carries out the reaction [[Fe-S] cluster scaffold protein carrying a second [4Fe-4S](2+) cluster] + N(6)-octanoyl-L-lysyl-[protein] + 2 oxidized [2Fe-2S]-[ferredoxin] + 2 S-adenosyl-L-methionine + 4 H(+) = [[Fe-S] cluster scaffold protein] + N(6)-[(R)-dihydrolipoyl]-L-lysyl-[protein] + 4 Fe(3+) + 2 hydrogen sulfide + 2 5'-deoxyadenosine + 2 L-methionine + 2 reduced [2Fe-2S]-[ferredoxin]. Its pathway is protein modification; protein lipoylation via endogenous pathway; protein N(6)-(lipoyl)lysine from octanoyl-[acyl-carrier-protein]: step 2/2. Catalyzes the radical-mediated insertion of two sulfur atoms into the C-6 and C-8 positions of the octanoyl moiety bound to the lipoyl domains of lipoate-dependent enzymes, thereby converting the octanoylated domains into lipoylated derivatives. This chain is Lipoyl synthase, found in Halobacterium salinarum (strain ATCC 29341 / DSM 671 / R1).